The sequence spans 236 residues: 2-C-methyl-D-erythritol 4-phosphate cytidylyltransferase (236 aa).

This sequence belongs to the IspD/TarI cytidylyltransferase family. IspD subfamily. As to quaternary structure, homodimer.

It catalyses the reaction 2-C-methyl-D-erythritol 4-phosphate + CTP + H(+) = 4-CDP-2-C-methyl-D-erythritol + diphosphate. It participates in isoprenoid biosynthesis; isopentenyl diphosphate biosynthesis via DXP pathway; isopentenyl diphosphate from 1-deoxy-D-xylulose 5-phosphate: step 2/6. Functionally, catalyzes the formation of 4-diphosphocytidyl-2-C-methyl-D-erythritol from CTP and 2-C-methyl-D-erythritol 4-phosphate (MEP). In Escherichia coli O127:H6 (strain E2348/69 / EPEC), this protein is 2-C-methyl-D-erythritol 4-phosphate cytidylyltransferase.